The sequence spans 409 residues: Serine/threonine transporter SstT (409 aa).

The next 9 helical transmembrane spans lie at 24-44 (LALGIVIGSVSPQLGLAAGLF), 48-68 (FVGALKAVAPVLVFILVAATI), 82-102 (IIVLYLIGTFSAALTAVIAGM), 142-162 (AIANANYIGILAWALVLGAAL), 194-214 (LGIFGLVSSTIAETGFGALAG), 218-238 (LLAVLLGCMAFIALVVNPAIV), 292-312 (IPLGATVNMGGAAITITVLAM), 319-339 (GIQVDFATALLLSLVATVSAC), and 365-385 (VAMQVVAVGFIIGVIQDSAET).

This sequence belongs to the dicarboxylate/amino acid:cation symporter (DAACS) (TC 2.A.23) family.

It localises to the cell inner membrane. The enzyme catalyses L-serine(in) + Na(+)(in) = L-serine(out) + Na(+)(out). The catalysed reaction is L-threonine(in) + Na(+)(in) = L-threonine(out) + Na(+)(out). In terms of biological role, involved in the import of serine and threonine into the cell, with the concomitant import of sodium (symport system). In Neisseria meningitidis serogroup C / serotype 2a (strain ATCC 700532 / DSM 15464 / FAM18), this protein is Serine/threonine transporter SstT.